The primary structure comprises 344 residues: Geranylgeranyl pyrophosphate synthase 10, mitochondrial (344 aa).

A mitochondrion-targeting transit peptide spans 1 to 40 (MENREVFVYIVISIFRSLQFLFWRFRPRYNDVTSALTRPL). Residues lysine 91, arginine 94, and histidine 123 each coordinate isopentenyl diphosphate. Aspartate 130 and aspartate 136 together coordinate Mg(2+). Arginine 141 provides a ligand contact to dimethylallyl diphosphate. Arginine 142 serves as a coordination point for isopentenyl diphosphate. Dimethylallyl diphosphate is bound by residues lysine 229, threonine 230, glutamine 267, lysine 284, and lysine 294.

It belongs to the FPP/GGPP synthase family. As to quaternary structure, monomer. It depends on Mg(2+) as a cofactor.

It is found in the mitochondrion. It catalyses the reaction isopentenyl diphosphate + dimethylallyl diphosphate = (2E)-geranyl diphosphate + diphosphate. The catalysed reaction is isopentenyl diphosphate + (2E)-geranyl diphosphate = (2E,6E)-farnesyl diphosphate + diphosphate. It carries out the reaction isopentenyl diphosphate + (2E,6E)-farnesyl diphosphate = (2E,6E,10E)-geranylgeranyl diphosphate + diphosphate. The protein operates within isoprenoid biosynthesis; farnesyl diphosphate biosynthesis; farnesyl diphosphate from geranyl diphosphate and isopentenyl diphosphate: step 1/1. Its pathway is isoprenoid biosynthesis; geranyl diphosphate biosynthesis; geranyl diphosphate from dimethylallyl diphosphate and isopentenyl diphosphate: step 1/1. It participates in isoprenoid biosynthesis; geranylgeranyl diphosphate biosynthesis; geranylgeranyl diphosphate from farnesyl diphosphate and isopentenyl diphosphate: step 1/1. In terms of biological role, catalyzes the trans-addition of the three molecules of IPP onto DMAPP to form geranylgeranyl pyrophosphate. The chain is Geranylgeranyl pyrophosphate synthase 10, mitochondrial from Arabidopsis thaliana (Mouse-ear cress).